A 354-amino-acid polypeptide reads, in one-letter code: Dual-specificity RNA methyltransferase RlmN (354 aa).

Catalysis depends on E89, which acts as the Proton acceptor. The Radical SAM core domain occupies 106–339 (KEAKYTVCVS…CTIRKSKGMD (234 aa)). A disulfide bond links C113 and C344. [4Fe-4S] cluster-binding residues include C120, C124, and C127. Residues 170–171 (GE), S202, 225–227 (SLH), and N301 each bind S-adenosyl-L-methionine. The active-site S-methylcysteine intermediate is the C344.

This sequence belongs to the radical SAM superfamily. RlmN family. It depends on [4Fe-4S] cluster as a cofactor.

It is found in the cytoplasm. It carries out the reaction adenosine(2503) in 23S rRNA + 2 reduced [2Fe-2S]-[ferredoxin] + 2 S-adenosyl-L-methionine = 2-methyladenosine(2503) in 23S rRNA + 5'-deoxyadenosine + L-methionine + 2 oxidized [2Fe-2S]-[ferredoxin] + S-adenosyl-L-homocysteine. It catalyses the reaction adenosine(37) in tRNA + 2 reduced [2Fe-2S]-[ferredoxin] + 2 S-adenosyl-L-methionine = 2-methyladenosine(37) in tRNA + 5'-deoxyadenosine + L-methionine + 2 oxidized [2Fe-2S]-[ferredoxin] + S-adenosyl-L-homocysteine. Specifically methylates position 2 of adenine 2503 in 23S rRNA and position 2 of adenine 37 in tRNAs. m2A2503 modification seems to play a crucial role in the proofreading step occurring at the peptidyl transferase center and thus would serve to optimize ribosomal fidelity. This chain is Dual-specificity RNA methyltransferase RlmN, found in Nautilia profundicola (strain ATCC BAA-1463 / DSM 18972 / AmH).